Reading from the N-terminus, the 161-residue chain is Allophycocyanin alpha chain (161 aa).

Position 71 is an N4-methylasparagine (N71). C81 provides a ligand contact to (2R,3E)-phycocyanobilin.

It belongs to the phycobiliprotein family. In terms of assembly, heterodimer of an alpha and a beta chain. Contains one covalently linked phycocyanobilin chromophore.

The protein resides in the plastid. It is found in the chloroplast thylakoid membrane. In terms of biological role, light-harvesting photosynthetic bile pigment-protein from the phycobiliprotein complex. Allophycocyanin has a maximum absorption at approximately 650 nanometers. In Cyanidium caldarium (Red alga), this protein is Allophycocyanin alpha chain (apcA).